Here is a 370-residue protein sequence, read N- to C-terminus: Death-associated protein kinase 2 (370 aa).

One can recognise a Protein kinase domain in the interval 23–285 (YDIGEELGSG…IQEALRHPWI (263 aa)). Residues 29 to 37 (LGSGQFAIV) and Lys52 contribute to the ATP site. Asp149 serves as the catalytic Proton acceptor. The interval 287-354 (PVDTQQAMVR…RNCESDTEEN (68 aa)) is calmodulin-binding. An autoinhibitory domain region spans residues 292–301 (QAMVRRESVV). The residue at position 299 (Ser299) is a Phosphoserine. At Ser318 the chain carries Phosphoserine; by autocatalysis. At Ser349 the chain carries Phosphoserine. Thr369 carries the post-translational modification Phosphothreonine.

This sequence belongs to the protein kinase superfamily. CAMK Ser/Thr protein kinase family. DAP kinase subfamily. As to quaternary structure, homodimer in its autoinhibited state. Active as monomer. Interacts with 14-3-3 proteins YWHAB, YWHAE, YWHAG, YWHAH, YWHAQ, YWHAZ and SFN; the interaction requires DAPK2 phosphorylation at Thr-369 and suppresses DAPK2 kinase activity and DAPK2-induced apoptosis. The cofactor is Mg(2+). Post-translationally, autophosphorylation at Ser-318 inhibits its catalytic activity. Dephosphorylated at Ser-318 in response to activated Fas and TNF-alpha receptors. As to expression, expressed in peritubular interstitial cells of the renal cortex. Isoform 1 is found in the adult brain while isoform 2 is expressed in brains of embryos and young mice (at protein level).

The protein resides in the cytoplasm. It localises to the cytoplasmic vesicle. The protein localises to the autophagosome lumen. The enzyme catalyses L-seryl-[protein] + ATP = O-phospho-L-seryl-[protein] + ADP + H(+). The catalysed reaction is L-threonyl-[protein] + ATP = O-phospho-L-threonyl-[protein] + ADP + H(+). Activated by Ca(2+)/calmodulin. Regulated by a double locking mechanism, involving autophosphorylation at Ser-318, calmodulin binding, and dimerization. In the inactive state, Ser-318 is phosphorylated, and the kinase is dimeric. Activation involves: dephosphorylation at Ser-318, release-of-autoinhibition mechanism where calmodulin binding induces a conformational change that relieves the steric block of the active site by the autoinhibitory domain, and generation of the monomeric active form of the kinase. Its function is as follows. Calcium/calmodulin-dependent serine/threonine kinase involved in multiple cellular signaling pathways that trigger cell survival, apoptosis, and autophagy. Capable of regulating both type I apoptotic and type II autophagic cell death signals. The former involves caspase activation, chromatin and mitochondrial condensation while the latter involves caspase-independent cell death in conjunction with accumulation of mature autophagic vesicles, plasma membrane blebs, and nuclear condensation without DNA degradation. Mediator of anoikis and a suppressor of beta-catenin-dependent anchorage-independent growth of malignant epithelial cells. May play a role in granulocytic maturation. Regulates granulocytes motility by controlling cell spreading and polarization. The sequence is that of Death-associated protein kinase 2 (Dapk2) from Mus musculus (Mouse).